Here is a 217-residue protein sequence, read N- to C-terminus: Kunitz-type trypsin inhibitor-like 2 protein (217 aa).

The first 26 residues, Met-1–Asn-26, serve as a signal peptide directing secretion. Disulfide bonds link Cys-70–Cys-115 and Cys-168–Cys-175. The N-linked (GlcNAc...) asparagine glycan is linked to Asn-191.

This sequence belongs to the protease inhibitor I3 (leguminous Kunitz-type inhibitor) family.

The protein localises to the secreted. Its function is as follows. Might act as a protease inhibitor involved in plant defense responses. The protein is Kunitz-type trypsin inhibitor-like 2 protein (PIP20-2) of Pisum sativum (Garden pea).